The sequence spans 220 residues: MYQRPQNDYLRVNKRKSNYDQLNADSNSVPQLAQTQPRVQVYIIDKNDFKSLVQQLTSPQPCDRLPQNIPKHQDIRPEPINWTSSIPPSAMAVQEDPDVSLYMAYLQSLLEESSGSNGDQFEEPFDKYHSHMMAQSQPQDPTQSMPQSNGFEPFPSSWFNGSTQEMHGASSLQSTRVDYEYPLPLTPNFTFSSMTQHEVFGSDLDSIGPDEDLEFSYEIN.

The VQ motif lies at 49-57 (FKSLVQQLT). Disordered regions lie at residues 61–80 (PCDRLPQNIPKHQDIRPEPI) and 131–171 (HMMA…GASS). Composition is skewed to polar residues over residues 133-150 (MAQSQPQDPTQSMPQSNG) and 157-171 (SWFNGSTQEMHGASS).

Its subcellular location is the nucleus. Its function is as follows. May function as negative regulator of plant defense. The sequence is that of VQ motif-containing protein 5 from Arabidopsis thaliana (Mouse-ear cress).